The sequence spans 628 residues: Nuclear receptor subfamily 4 group A member 3 (628 aa).

Residues M1–H112 form an activation function (AF)-1 domain region. The required for DNA-PK heterotrimer stretch occupies residues M1 to S140. The segment at M1–T293 is interaction with NCOA1, NCOA2, NCOA3 and KAT2B. 2 disordered regions span residues H96–P163 and A269–G290. Residues G97–Q113 are compositionally biased toward basic residues. Pro residues predominate over residues P142–P151. A compositionally biased stretch (low complexity) spans S270–S289. The segment at residues E291–T366 is a DNA-binding region (nuclear receptor). NR C4-type zinc fingers lie at residues C294–C314 and C330–C354. The interval T366–P396 is disordered. Over residues K379 to S389 the composition is skewed to low complexity. The tract at residues K381–F628 is interaction with KAT2B. In terms of domain architecture, NR LBD spans P396–T625.

Belongs to the nuclear hormone receptor family. NR4 subfamily. As to quaternary structure, interacts with SIX3 (via homeobox); differentially regulates the transcriptional activities of NR4A3. Interacts with NR3C1 (via nuclear receptor DNA-binding domain); the interactions represses transcription activity of NR4A3 on the POMC promoter Nur response element (NurRE). Interacts with TRIM28; the interactions potentiates NR4A3 activity on NurRE promoter. Binds DNA as a monomer and homodimer. Interacts with PARP1; activates PARP1 by improving acetylation of PARP1 and suppressing the interaction between PARP1 and SIRT1. Interacts with the constituents of DNA-PK heterotrimer PRKDC, XRCC6 and XRCC5; phosphorylates and prevents NR4A3 ubiquitinylation and degradation. Interacts with NCOA2; potentiates the activity of the NR4A3. Interacts with NCOA1, NCOA3, MED1 and KAT2B. Interacts with EP300 and NCOA2; mediates the recruitment of MED1 in the coactivator complex. Post-translationally, phosphorylated by PRKDC. In terms of tissue distribution, expressed at high levels in cultured apoptotic neuronal cells and fetal brain, and at low level in adult brain.

It localises to the nucleus. Its function is as follows. Transcriptional activator that binds to regulatory elements in promoter regions in a cell- and response element (target)-specific manner. Induces gene expression by binding as monomers to the NR4A1 response element (NBRE) 5'-AAAAGGTCA-3' site and as homodimers to the Nur response element (NurRE) site in the promoter of their regulated target genes. Plays a role in the regulation of proliferation, survival and differentiation of many different cell types and also in metabolism and inflammation. Mediates proliferation of vascular smooth muscle, myeloid progenitor cell and type B pancreatic cells; promotes mitogen-induced vascular smooth muscle cell proliferation through transactivation of SKP2 promoter by binding a NBRE site. Upon PDGF stimulation, stimulates vascular smooth muscle cell proliferation by regulating CCND1 and CCND2 expression. In islets, induces type B pancreatic cell proliferation through up-regulation of genes that activate cell cycle, as well as genes that cause degradation of the CDKN1A. Negatively regulates myeloid progenitor cell proliferation by repressing RUNX1 in a NBRE site-independent manner. During inner ear, plays a role as a key mediator of the proliferative growth phase of semicircular canal development. Also mediates survival of neuron and smooth muscle cells; mediates CREB-induced neuronal survival, and during hippocampus development, plays a critical role in pyramidal cell survival and axonal guidance. Is required for S phase entry of the cell cycle and survival of smooth muscle cells by inducing CCND1, resulting in RB1 phosphorylation. Binds to NBRE motif in CCND1 promoter, resulting in the activation of the promoter and CCND1 transcription. Also plays a role in inflammation; Upon TNF stimulation, mediates monocyte adhesion by inducing the expression of VCAM1 and ICAM1 by binding to the NBRE consensus site. In mast cells activated by Fc-epsilon receptor cross-linking, promotes the synthesis and release of cytokines but impairs events leading to degranulation. Also plays a role in metabolism; by modulating feeding behavior; and by playing a role in energy balance by inhibiting the glucocorticoid-induced orexigenic neuropeptides AGRP expression, at least in part by forming a complex with activated NR3C1 on the AGRP-glucocorticoid response element (GRE), and thus weakening the DNA binding activity of NR3C1. Upon catecholamines stimulation, regulates gene expression that controls oxidative metabolism in skeletal muscle. Plays a role in glucose transport by regulating translocation of the SLC2A4 glucose transporter to the cell surface. Finally, during gastrulation plays a crucial role in the formation of anterior mesoderm by controlling cell migration. Also participates in cardiac hypertrophy by activating PARP1. In Rattus norvegicus (Rat), this protein is Nuclear receptor subfamily 4 group A member 3 (Nr4a3).